Here is a 486-residue protein sequence, read N- to C-terminus: FAD-dependent oxidoreductase domain-containing protein 1 (486 aa).

A helical transmembrane segment spans residues 62 to 82 (EHSDVVIVGGGVLGLSVAYWL).

As to quaternary structure, associates with components of the mitochondrial respiratory chain complex I. FAD is required as a cofactor.

The protein resides in the mitochondrion inner membrane. Its function is as follows. Required for the assembly of the mitochondrial membrane respiratory chain NADH dehydrogenase (Complex I). Involved in mid-late stages of complex I assembly. The polypeptide is FAD-dependent oxidoreductase domain-containing protein 1 (Homo sapiens (Human)).